A 353-amino-acid polypeptide reads, in one-letter code: Photosystem II protein D1 (353 aa).

Threonine 2 carries the N-acetylthreonine modification. Phosphothreonine is present on threonine 2. 3 consecutive transmembrane segments (helical) span residues 29–46 (YIGW…TATS), 118–133 (HFFL…EWEL), and 142–156 (WIAV…AATA). Histidine 118 is a chlorophyll a binding site. Tyrosine 126 contributes to the pheophytin a binding site. [CaMn4O5] cluster-binding residues include aspartate 170 and glutamate 189. A helical transmembrane segment spans residues 197–218 (FHMLGVAGVFGGSLFSAMHGSL). Histidine 198 serves as a coordination point for chlorophyll a. A quinone-binding positions include histidine 215 and 264-265 (SF). Residue histidine 215 coordinates Fe cation. Position 272 (histidine 272) interacts with Fe cation. The chain crosses the membrane as a helical span at residues 274 to 288 (FLAAWPVVGIWFTAL). Residues histidine 332, glutamate 333, aspartate 342, and alanine 344 each contribute to the [CaMn4O5] cluster site. Positions 345-353 (SVEAPSVNG) are excised as a propeptide.

It belongs to the reaction center PufL/M/PsbA/D family. PSII is composed of 1 copy each of membrane proteins PsbA, PsbB, PsbC, PsbD, PsbE, PsbF, PsbH, PsbI, PsbJ, PsbK, PsbL, PsbM, PsbT, PsbX, PsbY, PsbZ, Psb30/Ycf12, at least 3 peripheral proteins of the oxygen-evolving complex and a large number of cofactors. It forms dimeric complexes. The D1/D2 heterodimer binds P680, chlorophylls that are the primary electron donor of PSII, and subsequent electron acceptors. It shares a non-heme iron and each subunit binds pheophytin, quinone, additional chlorophylls, carotenoids and lipids. D1 provides most of the ligands for the Mn4-Ca-O5 cluster of the oxygen-evolving complex (OEC). There is also a Cl(-1) ion associated with D1 and D2, which is required for oxygen evolution. The PSII complex binds additional chlorophylls, carotenoids and specific lipids. is required as a cofactor. Tyr-161 forms a radical intermediate that is referred to as redox-active TyrZ, YZ or Y-Z. In terms of processing, C-terminally processed by CTPA; processing is essential to allow assembly of the oxygen-evolving complex and thus photosynthetic growth.

It is found in the plastid. The protein localises to the chloroplast thylakoid membrane. The enzyme catalyses 2 a plastoquinone + 4 hnu + 2 H2O = 2 a plastoquinol + O2. In terms of biological role, photosystem II (PSII) is a light-driven water:plastoquinone oxidoreductase that uses light energy to abstract electrons from H(2)O, generating O(2) and a proton gradient subsequently used for ATP formation. It consists of a core antenna complex that captures photons, and an electron transfer chain that converts photonic excitation into a charge separation. The D1/D2 (PsbA/PsbD) reaction center heterodimer binds P680, the primary electron donor of PSII as well as several subsequent electron acceptors. This is Photosystem II protein D1 from Chaetosphaeridium globosum (Charophycean green alga).